The sequence spans 512 residues: 2,3-bisphosphoglycerate-independent phosphoglycerate mutase (512 aa).

Positions 12 and 62 each coordinate Mn(2+). Catalysis depends on Ser62, which acts as the Phosphoserine intermediate. Residues His123, 153–154 (RD), Arg185, Arg191, 260–263 (RPDR), and Lys333 contribute to the substrate site. The Mn(2+) site is built by Asp400, His404, Asp441, His442, and His460.

This sequence belongs to the BPG-independent phosphoglycerate mutase family. Monomer. The cofactor is Mn(2+).

The catalysed reaction is (2R)-2-phosphoglycerate = (2R)-3-phosphoglycerate. Its pathway is carbohydrate degradation; glycolysis; pyruvate from D-glyceraldehyde 3-phosphate: step 3/5. In terms of biological role, catalyzes the interconversion of 2-phosphoglycerate and 3-phosphoglycerate. The polypeptide is 2,3-bisphosphoglycerate-independent phosphoglycerate mutase (Clostridium perfringens (strain SM101 / Type A)).